A 65-amino-acid chain; its full sequence is Large ribosomal subunit protein bL35 (65 aa).

A disordered region spans residues 1–22 (MPKIKTVRGAAKRFKKTGKGGF). Residues 10–22 (AAKRFKKTGKGGF) show a composition bias toward basic residues.

This sequence belongs to the bacterial ribosomal protein bL35 family.

This Klebsiella pneumoniae (strain 342) protein is Large ribosomal subunit protein bL35.